Consider the following 480-residue polypeptide: Salicylate hydroxylase asL1 (480 aa).

Residues 17 to 37 (PMEIAIVGGGIVGVILAIGLT) traverse the membrane as a helical segment. FAD is bound by residues glutamate 47 and alanine 60. N-linked (GlcNAc...) asparagine glycosylation is present at asparagine 87. Residue arginine 131 coordinates FAD. Asparagine 168 carries N-linked (GlcNAc...) asparagine glycosylation. Active-site residues include arginine 213 and tyrosine 246. N-linked (GlcNAc...) asparagine glycosylation occurs at asparagine 250. Aspartate 329 and alanine 342 together coordinate FAD. Residues asparagine 400 and asparagine 464 are each glycosylated (N-linked (GlcNAc...) asparagine).

Belongs to the paxM FAD-dependent monooxygenase family. FAD is required as a cofactor.

The protein localises to the membrane. It participates in secondary metabolite biosynthesis; terpenoid biosynthesis. Its function is as follows. Salicylate hydroxylase; part of the gene cluster that mediates the biosynthesis of xenovulene A, an unusual meroterpenoid that has potent inhibitory effects on the human gamma-aminobutyrate A (GABAA) benzodiazepine receptor. The first step of xenovulene A biosynthesis is the biosynthesis of 3-methylorcinaldehyde performed by the non-reducing polyketide synthase aspks1. The salicylate hydroxylase asL1 then catalyzes the oxidative dearomatization of 3-methylorcinaldehyde to yield a dearomatized hydroxycyclohexadione. The 2-oxoglutarate-dependent dioxygenase asL3 further catalyzes the oxidative ring expansion to provide the first tropolone metabolite. The cytochrome P450 monooxygenase asR2 allows the synthesis of tropolone hemiacetal. In parallel, a previously unrecognised class of terpene cyclase, asR6, produces alpha-humulene from farnesylpyrophosphate (FPP). The putative Diels-Alderase asR5 probably catalyzes the formation of the tropolone-humulene skeleton by linking humulene and the polyketide moiety. Oxidative-ring contractions catalyzed by asL4 and asL6 then processively remove carbon atoms from the polyketide to yield xenovulene A. The polypeptide is Salicylate hydroxylase asL1 (Sarocladium schorii (Acremonium strictum (strain IMI 501407))).